Reading from the N-terminus, the 71-residue chain is uncharacterized protein (71 aa).

This is an uncharacterized protein from Spiroplasma virus 4 (SpV4).